The primary structure comprises 221 residues: Ribosomal RNA small subunit methyltransferase Nep1 (221 aa).

Residues Gly-174, Gly-179, and 196–201 contribute to the S-adenosyl-L-methionine site; that span reads VGDEPL.

It belongs to the class IV-like SAM-binding methyltransferase superfamily. RNA methyltransferase NEP1 family. In terms of assembly, homodimer.

It carries out the reaction a pseudouridine in rRNA + S-adenosyl-L-methionine = an N(1)-methylpseudouridine in rRNA + S-adenosyl-L-homocysteine + H(+). In terms of biological role, methyltransferase involved in ribosomal biogenesis. Specifically catalyzes the N1-methylation of the pseudouridine corresponding to position 914 in M.jannaschii 16S rRNA. The protein is Ribosomal RNA small subunit methyltransferase Nep1 of Pyrobaculum neutrophilum (strain DSM 2338 / JCM 9278 / NBRC 100436 / V24Sta) (Thermoproteus neutrophilus).